We begin with the raw amino-acid sequence, 254 residues long: Aspartate/glutamate leucyltransferase (254 aa).

The protein belongs to the R-transferase family. Bpt subfamily.

Its subcellular location is the cytoplasm. It carries out the reaction N-terminal L-glutamyl-[protein] + L-leucyl-tRNA(Leu) = N-terminal L-leucyl-L-glutamyl-[protein] + tRNA(Leu) + H(+). The enzyme catalyses N-terminal L-aspartyl-[protein] + L-leucyl-tRNA(Leu) = N-terminal L-leucyl-L-aspartyl-[protein] + tRNA(Leu) + H(+). Functions in the N-end rule pathway of protein degradation where it conjugates Leu from its aminoacyl-tRNA to the N-termini of proteins containing an N-terminal aspartate or glutamate. This is Aspartate/glutamate leucyltransferase from Maricaulis maris (strain MCS10) (Caulobacter maris).